The chain runs to 78 residues: Acyl carrier protein (78 aa).

Residues 1 to 77 (MALIDEIKDV…DAAKYIEEHK (77 aa)) enclose the Carrier domain. O-(pantetheine 4'-phosphoryl)serine is present on Ser-37.

Belongs to the acyl carrier protein (ACP) family. In terms of processing, 4'-phosphopantetheine is transferred from CoA to a specific serine of apo-ACP by AcpS. This modification is essential for activity because fatty acids are bound in thioester linkage to the sulfhydryl of the prosthetic group.

It localises to the secreted. The protein operates within lipid metabolism; fatty acid biosynthesis. Functionally, carrier of the growing fatty acid chain in fatty acid biosynthesis. Has hemolytic activity forming pores approximately 1 nm in diameter into erythrocytes. Is able to induce murine colonic lesions and to disrupt the integrity of epithelial cell monolayers. This Brachyspira hyodysenteriae (Treponema hyodysenteriae) protein is Acyl carrier protein (acpP).